The following is a 401-amino-acid chain: Probable E3 ubiquitin-protein ligase RHC2A (401 aa).

The interval 41–93 (TPSDSFTTTTTTQHRSPTRFPPPSSSSSTPSASMHADNSPTPTIVTRTRSNRS) is disordered. Residues 76–93 (ADNSPTPTIVTRTRSNRS) are compositionally biased toward polar residues. Residues 201 to 242 (CAVCKENFVLKSSAREMPCNHIYHPDCILPWLAIRNSCPVCR) form an RING-type; atypical zinc finger.

It catalyses the reaction S-ubiquitinyl-[E2 ubiquitin-conjugating enzyme]-L-cysteine + [acceptor protein]-L-lysine = [E2 ubiquitin-conjugating enzyme]-L-cysteine + N(6)-ubiquitinyl-[acceptor protein]-L-lysine.. The protein operates within protein modification; protein ubiquitination. Its function is as follows. Probable E3 ubiquitin-protein ligase that may possess E3 ubiquitin ligase activity in vitro. This chain is Probable E3 ubiquitin-protein ligase RHC2A, found in Arabidopsis thaliana (Mouse-ear cress).